A 391-amino-acid polypeptide reads, in one-letter code: DNA-directed RNA polymerase subunit Rpo1C (391 aa).

This sequence belongs to the RNA polymerase beta' chain family. As to quaternary structure, part of the RNA polymerase complex.

The protein resides in the cytoplasm. Its subcellular location is the chromosome. The enzyme catalyses RNA(n) + a ribonucleoside 5'-triphosphate = RNA(n+1) + diphosphate. Functionally, DNA-dependent RNA polymerase (RNAP) catalyzes the transcription of DNA into RNA using the four ribonucleoside triphosphates as substrates. Forms part of the jaw domain. The sequence is that of DNA-directed RNA polymerase subunit Rpo1C from Thermococcus kodakarensis (strain ATCC BAA-918 / JCM 12380 / KOD1) (Pyrococcus kodakaraensis (strain KOD1)).